Here is a 1846-residue protein sequence, read N- to C-terminus: Peripheral-type benzodiazepine receptor-associated protein 1 (1846 aa).

3 disordered regions span residues 57 to 97 (EESS…GYSC), 281 to 318 (NQRE…DDVE), and 560 to 628 (GPKD…SEVE). Residues 576 to 587 (PKSSEPALTTLT) show a composition bias toward polar residues. Residues 599 to 612 (SLSNSSRSESIHNS) show a composition bias toward low complexity. The SH3 1 domain maps to 649–716 (ARIQVFLARY…PSNFVERVSD (68 aa)). The interval 726 to 785 (ELADSSHSSGPELSFLSGGGGGCSSGGQSSGGRSQPRPEEEAAGDELSLSPPPEGLGEPL) is disordered. Over residues 742–755 (SGGGGGCSSGGQSS) the composition is skewed to gly residues. Fibronectin type-III domains lie at 787–878 (VPYP…AGAG), 880–972 (VPSQ…TLPA), and 977–1075 (APLD…PALA). Disordered stretches follow at residues 1084–1107 (SCLS…GLGD), 1163–1219 (EPTL…LDSG), 1243–1302 (HSRN…SDEE), 1322–1476 (SIPE…PESS), 1492–1617 (YDSE…QDLP), 1704–1755 (LTEA…AAQK), and 1812–1846 (VPSN…RVQC). The span at 1202 to 1219 (TQKKPSIEACHGGDLDSG) shows a compositional bias: basic and acidic residues. The span at 1251-1265 (DIQEEEEEEEEEEEE) shows a compositional bias: acidic residues. Polar residues predominate over residues 1270–1283 (PCSSQKQVAGNSIR). A compositionally biased stretch (acidic residues) spans 1324 to 1335 (PEEEEEEEEEEG). 2 stretches are compositionally biased toward basic and acidic residues: residues 1411–1420 (RPQDPREHCS) and 1545–1577 (AWEK…ESRG). The region spanning 1616–1684 (LPVRVFVALF…PCNMVAEVAV (69 aa)) is the SH3 2 domain. Positions 1705–1719 (TEASGNGPSVYSSAH) are enriched in polar residues. Positions 1755-1822 (KTSRPMVAAF…PSNFLEGPGP (68 aa)) constitute an SH3 3 domain. Positions 1817–1830 (LEGPGPESGSLESG) are enriched in low complexity.

It belongs to the RIMBP family. Interacts with RIMS1 and RIMS2. Interacts with TSPO. Interacts with CACNA1A. Predominantly expressed in the brain.

The protein resides in the cytoplasm. Its subcellular location is the mitochondrion. Required for synaptic transmission regulation. It probably controls the recruitement of voltage-gated calcium channels to the presynaptic membrane, and modulates neurotransmitter release. The polypeptide is Peripheral-type benzodiazepine receptor-associated protein 1 (Mus musculus (Mouse)).